A 231-amino-acid polypeptide reads, in one-letter code: CLAVATA3/ESR (CLE)-related protein 4B-2 (231 aa).

The signal sequence occupies residues 1 to 21 (MATNTMLCLLILSVVLALAFA). A required for secretion from the host cytoplasm to the host apoplasm region spans residues 21–83 (ATNKKGDEEP…SNQLPNNNWM (63 aa)). Asn32 carries N-linked (GlcNAc...) asparagine glycosylation. The disordered stretch occupies residues 116–231 (RKTGMHSQRH…APAGPDPIHH (116 aa)). Composition is skewed to basic and acidic residues over residues 125-137 (HHEE…EKRV) and 144-221 (PIHH…EKRG). The A-1 repeat unit spans residues 127–135 (EETTLEQEK). The tract at residues 127–219 (EETTLEQEKR…HEETTFEQEK (93 aa)) is 5 X approximate repeat A. The CLE-1 repeat unit spans residues 136 to 147 (RVAGAGPDPIHH). Residues 136 to 231 (RVAGAGPDPI…APAGPDPIHH (96 aa)) form a 5 X approximate repeat CLE region. Residues 148 to 156 (EETTLEQEK) form an A-2 repeat. The CLE-2 repeat unit spans residues 157-168 (RAVPAGPDPKHH). The A-3 repeat unit spans residues 169–177 (EETTLEQEK). Residues 178–189 (RAVPAGPDPKHH) form a CLE-3 repeat. One copy of the A-4 repeat lies at 190 to 198 (EETTLEQEK). Residues 199–210 (RAVPAGPDPKHH) form a CLE-4 repeat. The stretch at 211-219 (EETTFEQEK) is one A-5 repeat. One copy of the CLE-5 repeat lies at 220 to 231 (RGAPAGPDPIHH).

It belongs to the CLV3/ESR signal peptide family. In terms of tissue distribution, highly expressed exclusively within the dorsal esophageal gland cell during syncytium formation in host plants.

Its subcellular location is the secreted. It localises to the host cytoplasm. The protein localises to the host extracellular space. The protein resides in the extracellular space. It is found in the apoplast. Functionally, mimics host plant CLE extracellular signal peptides that regulate cell fate. May play a role in the differentiation or division of feeding cells (syncytia) induced in plant roots during infection. The protein is CLAVATA3/ESR (CLE)-related protein 4B-2 (CLE-4B-2) of Globodera rostochiensis (Golden nematode worm).